Here is a 1032-residue protein sequence, read N- to C-terminus: uncharacterized protein (1032 aa).

The Cytoplasmic portion of the chain corresponds to 1–17 (MYEEIRMKFTDIFIRRP). Residues 18 to 36 (VLAVSISLLMIILGLQAIS) form a helical membrane-spanning segment. At 37 to 337 (KLAVREYPKM…TIAINSSIHE (301 aa)) the chain is on the periplasmic side. A helical membrane pass occupies residues 338–357 (VIKTIGEATLIVLVVILMFI). Residues 358–363 (GSFRAI) are Cytoplasmic-facing. A helical membrane pass occupies residues 364–383 (LIPILAIPISLIGVLMLLQS). The Periplasmic segment spans residues 384–389 (FNFSIN). A helical membrane pass occupies residues 390 to 411 (LMTLLALILAIGLVVDDAIVVL). The Cytoplasmic segment spans residues 412–438 (ENIDRHIKAGETPFRAAIIGTREIAVP). The chain crosses the membrane as a helical span at residues 439–457 (VISMTIALIAVYSPMALMG). The Periplasmic portion of the chain corresponds to 458–470 (GITGTLFKEFALT). Residues 471 to 493 (LAGAVFISGVVALTLSPMMSSKL) traverse the membrane as a helical segment. Over 494–529 (LKSNAKPTWMEERVEHTLGKVNRVYEYMLDLVMLNR) the chain is Cytoplasmic. A helical membrane pass occupies residues 530–548 (KSMLAFAVVIFSTLPFLFN). Topologically, residues 549 to 852 (SLSSELTPNE…ARQLVQEGNA (304 aa)) are periplasmic. The helical transmembrane segment at 853 to 872 (LAVTFALAVIIIFLVLAIQF) threads the bilayer. At 873-878 (ESIRDP) the chain is on the cytoplasmic side. A helical transmembrane segment spans residues 879–898 (MVIMISVPLAVSGALVSLNI). The Periplasmic segment spans residues 899 to 910 (LSFFSIAGTTLN). A helical membrane pass occupies residues 911 to 932 (IYSQVGLITLVGLITKHGILMC). At 933-960 (EVAKEEQLNHGKTRIEAITHAAKVRLRP) the chain is on the cytoplasmic side. A helical transmembrane segment spans residues 961–979 (ILMTTAAMVAGLIPLLYAT). The Periplasmic portion of the chain corresponds to 980-992 (GAGAVSRFSIGIV). The chain crosses the membrane as a helical span at residues 993 to 1015 (IVAGLSIGTIFTLFVLPVVYSYV). Over 1016-1032 (ATEHKPLPVFDENKTTH) the chain is Cytoplasmic.

It belongs to the resistance-nodulation-cell division (RND) (TC 2.A.6) family.

It localises to the cell inner membrane. Functionally, could be a drug efflux pump. This is an uncharacterized protein from Haemophilus influenzae (strain ATCC 51907 / DSM 11121 / KW20 / Rd).